Consider the following 342-residue polypeptide: L-threonine 3-dehydrogenase (342 aa).

Residue Cys-38 coordinates Zn(2+). Active-site charge relay system residues include Thr-40 and His-43. His-63, Glu-64, Cys-93, Cys-96, Cys-99, and Cys-107 together coordinate Zn(2+). Residues Ile-175, Asp-195, Arg-200, 262–264, and 286–287 each bind NAD(+); these read LGI and IY.

This sequence belongs to the zinc-containing alcohol dehydrogenase family. As to quaternary structure, homotetramer. The cofactor is Zn(2+).

It is found in the cytoplasm. The enzyme catalyses L-threonine + NAD(+) = (2S)-2-amino-3-oxobutanoate + NADH + H(+). It participates in amino-acid degradation; L-threonine degradation via oxydo-reductase pathway; glycine from L-threonine: step 1/2. Functionally, catalyzes the NAD(+)-dependent oxidation of L-threonine to 2-amino-3-ketobutyrate. The polypeptide is L-threonine 3-dehydrogenase (Burkholderia lata (strain ATCC 17760 / DSM 23089 / LMG 22485 / NCIMB 9086 / R18194 / 383)).